The primary structure comprises 249 residues: uncharacterized protein (249 aa).

It localises to the cytoplasm. The protein localises to the nucleus. This is an uncharacterized protein from Schizosaccharomyces pombe (strain 972 / ATCC 24843) (Fission yeast).